A 207-amino-acid chain; its full sequence is Large ribosomal subunit protein uL4 (207 aa).

The tract at residues 48-87 (THAVKNRSAVSGGGKKPWRQKGTGRARQGSIRSPQFRGGG) is disordered.

The protein belongs to the universal ribosomal protein uL4 family. Part of the 50S ribosomal subunit.

In terms of biological role, one of the primary rRNA binding proteins, this protein initially binds near the 5'-end of the 23S rRNA. It is important during the early stages of 50S assembly. It makes multiple contacts with different domains of the 23S rRNA in the assembled 50S subunit and ribosome. Forms part of the polypeptide exit tunnel. The protein is Large ribosomal subunit protein uL4 of Limosilactobacillus reuteri subsp. reuteri (strain JCM 1112) (Lactobacillus reuteri).